Here is a 371-residue protein sequence, read N- to C-terminus: Conglutinin (371 aa).

The first 20 residues, 1-20, serve as a signal peptide directing secretion; sequence MLLLPLSVLLLLTQPWRSLG. Residues 46–216 form the Collagen-like domain; it reads GLPGHDGQDG…TGAKGESGLA (171 aa). Residues 47 to 215 form a disordered region; that stretch reads LPGHDGQDGR…ETGAKGESGL (169 aa). Residues 51–65 show a composition bias toward basic and acidic residues; the sequence is DGQDGRECPHGEKGD. The residue at position 63 (lysine 63) is a 5-hydroxylysine. The span at 71-83 shows a compositional bias: low complexity; sequence PAGRAGRPGWVGP. Proline 78 carries the post-translational modification 4-hydroxyproline. The residue at position 87 (lysine 87) is a 5-hydroxylysine. Position 96 is a 4-hydroxyproline (proline 96). Lysine 99 carries the 5-hydroxylysine modification. 4 positions are modified to 4-hydroxyproline: proline 108, proline 111, proline 129, and proline 132. Lysine 135 and lysine 141 each carry 5-hydroxylysine. Over residues 139–148 the composition is skewed to gly residues; the sequence is GPKGGVGAPG. A 4-hydroxyproline mark is found at proline 147 and proline 153. Residues lysine 159 and lysine 162 each carry the 5-hydroxylysine modification. 4-hydroxyproline occurs at positions 171 and 195. Position 198 is a 5-hydroxylysine (lysine 198). Positions 201–203 match the Cell attachment site motif; that stretch reads RGD. The C-type lectin domain maps to 273 to 371; that stretch reads QLCREAKGQL…SKQLLVICEF (99 aa). 2 disulfides stabilise this stretch: cysteine 275/cysteine 369 and cysteine 347/cysteine 361. Asparagine 337 carries an N-linked (GlcNAc...) asparagine glycan.

Belongs to the SFTPD family. As to quaternary structure, oligomeric complex of 4 set of homotrimers. Post-translationally, the hydroxylysines may be O-glycosylated.

In terms of biological role, calcium-dependent lectin-like protein which binds to a yeast cell wall extract and immune complexes through the complement component (C3bi). It is capable of binding non-reducing terminal N-acetylglucosamine, mannose, and fucose residues. In Bos taurus (Bovine), this protein is Conglutinin (CGN1).